A 213-amino-acid chain; its full sequence is Nicotinate-nucleotide adenylyltransferase (213 aa).

This sequence belongs to the NadD family.

It carries out the reaction nicotinate beta-D-ribonucleotide + ATP + H(+) = deamido-NAD(+) + diphosphate. Its pathway is cofactor biosynthesis; NAD(+) biosynthesis; deamido-NAD(+) from nicotinate D-ribonucleotide: step 1/1. Its function is as follows. Catalyzes the reversible adenylation of nicotinate mononucleotide (NaMN) to nicotinic acid adenine dinucleotide (NaAD). This chain is Nicotinate-nucleotide adenylyltransferase, found in Salmonella typhimurium (strain LT2 / SGSC1412 / ATCC 700720).